We begin with the raw amino-acid sequence, 369 residues long: Transcription initiation factor IIA large subunit (369 aa).

Polar residues-rich tracts occupy residues 113-210 (HGNS…QNSP) and 218-233 (TESS…NDVP). The disordered stretch occupies residues 113–248 (HGNSNYYSPP…IHDLDDAGSP (136 aa)). The residue at position 249 (S249) is a Phosphoserine. Residues 282-319 (IEDNEDEKKPPVDTPSDEAINSDLDDPDSDEAPETEEG) are disordered. Positions 304–319 (DLDDPDSDEAPETEEG) are enriched in acidic residues.

The protein belongs to the TFIIA subunit 1 family. In terms of assembly, TFIIA is a heterodimer of the large subunit and the small subunit gamma.

The protein localises to the nucleus. Its function is as follows. TFIIA is a component of the transcription machinery of RNA polymerase II and plays an important role in transcriptional activation. TFIIA in a complex with tbp mediates transcriptional activity. The sequence is that of Transcription initiation factor IIA large subunit from Schizosaccharomyces pombe (strain 972 / ATCC 24843) (Fission yeast).